A 115-amino-acid chain; its full sequence is uncharacterized protein (115 aa).

This is an uncharacterized protein from Schizosaccharomyces pombe (strain 972 / ATCC 24843) (Fission yeast).